Reading from the N-terminus, the 934-residue chain is Leucine--tRNA ligase 1 (934 aa).

Residues proline 41–histidine 51 carry the 'HIGH' region motif. The short motif at lysine 616–serine 620 is the 'KMSKS' region element. Lysine 619 is a binding site for ATP.

It belongs to the class-I aminoacyl-tRNA synthetase family.

It localises to the cytoplasm. It catalyses the reaction tRNA(Leu) + L-leucine + ATP = L-leucyl-tRNA(Leu) + AMP + diphosphate. In Saccharolobus solfataricus (strain ATCC 35092 / DSM 1617 / JCM 11322 / P2) (Sulfolobus solfataricus), this protein is Leucine--tRNA ligase 1.